Here is a 315-residue protein sequence, read N- to C-terminus: MANLKAIRDRIKTIKDTRKITEAMRLVAAAKVRRAQEQVMASRPFADRLAQVLYSLQTRLRFEDVDLPLLAKRPVKTVALLVVTGDRGLCGGYNTNVIRRAKERLQELEAEGLKYTLVIVGRKAAQYFQRRDYPIDAVYSGLEQIPSASEAGQIASELLSLFLSETVDRVELIYTKFVSLISSKPVVQTLLPLDPQGLETADDEIFRLTTRGSHLEVNREKVTSTLPALPSDMIFEQDPLQILDALLPLYLNNQLLRALQEAAASELAARMTAMNNASDNAQALIGTLTLSYNKARQAAITQEILEVVAGAEALR.

F-type ATPases have 2 components, CF(1) - the catalytic core - and CF(0) - the membrane proton channel. CF(1) has five subunits: alpha(3), beta(3), gamma(1), delta(1), epsilon(1). CF(0) has four main subunits: a(1), b(1), b'(1) and c(9-12).

Its subcellular location is the cellular thylakoid membrane. In terms of biological role, produces ATP from ADP in the presence of a proton gradient across the membrane. The gamma chain is believed to be important in regulating ATPase activity and the flow of protons through the CF(0) complex. Its function is as follows. The complex from the organism is particularly stable to disruption and remains functional after 6 hrs at 55 degrees Celsius. In Thermosynechococcus vestitus (strain NIES-2133 / IAM M-273 / BP-1), this protein is ATP synthase gamma chain.